Here is a 527-residue protein sequence, read N- to C-terminus: Oviduct-specific glycoprotein (527 aa).

A signal peptide spans M1–A21. A GH18 domain is found at H22 to A385. C26 and C51 are disulfide-bonded. Residue N62 is glycosylated (N-linked (GlcNAc...) asparagine). Chitin is bound by residues A71–R72, G98–N101, Y142, L211–D214, and W355. 2 N-linked (GlcNAc...) asparagine glycosylation sites follow: N402 and N441. The disordered stretch occupies residues T433–D527.

This sequence belongs to the glycosyl hydrolase 18 family. Oviduct.

The protein localises to the cytoplasmic vesicle. It localises to the secretory vesicle. Binds to oocyte zona pellucida in vivo. May play a role in the fertilization process and/or early embryonic development. This chain is Oviduct-specific glycoprotein (OVGP1), found in Sus scrofa (Pig).